The sequence spans 71 residues: Small ribosomal subunit protein bS21 (71 aa).

It belongs to the bacterial ribosomal protein bS21 family.

The chain is Small ribosomal subunit protein bS21 from Alcanivorax borkumensis (strain ATCC 700651 / DSM 11573 / NCIMB 13689 / SK2).